Consider the following 107-residue polypeptide: Somatoliberin (107 aa).

An N-terminal signal peptide occupies residues 1–19; it reads MPLWVFFVILTLTNGSHCS. The propeptide occupies 20–30; sequence PSPSLPFRIRR. Leu74 is subject to Leucine amide. The propeptide occupies 77 to 107; it reads QVDSMWADHRQMSLESLLAALLQKHSRDSQG.

This sequence belongs to the glucagon family.

It localises to the secreted. In terms of biological role, GRF is released by the hypothalamus and acts on the adenohypophyse to stimulate the secretion of growth hormone. In Mesocricetus auratus (Golden hamster), this protein is Somatoliberin (GHRH).